Here is a 75-residue protein sequence, read N- to C-terminus: MSSGGLLLLLGLLTLWAELTPVSSQDRPKKPGLCPPRPQKPPCVRECKNDWICPGEQKCCRYGCIYECRDPIFVK.

Residues 1–24 (MSSGGLLLLLGLLTLWAELTPVSS) form the signal peptide. The WAP domain maps to 27–72 (RPKKPGLCPPRPQKPPCVRECKNDWICPGEQKCCRYGCIYECRDPI). 4 disulfides stabilise this stretch: cysteine 34/cysteine 60, cysteine 43/cysteine 64, cysteine 47/cysteine 59, and cysteine 53/cysteine 68.

The protein belongs to the venom waprin family. In terms of tissue distribution, expressed by the venom gland.

The protein localises to the secreted. Functionally, damages membranes of susceptible bacteria. Has no hemolytic activity. Not toxic to mice. Does not inhibit the proteinases elastase and cathepsin G. The chain is Notewaprin-b from Notechis scutatus scutatus (Mainland tiger snake).